Reading from the N-terminus, the 332-residue chain is Ketol-acid reductoisomerase (NADP(+)) (332 aa).

The region spanning 1-182 (MAQTWKDTDI…GSARAGLIKT (182 aa)) is the KARI N-terminal Rossmann domain. NADP(+) is bound by residues 25 to 28 (YGIQ), K48, S53, and 83 to 86 (DMIQ). H108 is a catalytic residue. Residue G134 participates in NADP(+) binding. Positions 183–329 (AFKEEVETDW…KEMRKMMWPD (147 aa)) constitute a KARI C-terminal knotted domain. Mg(2+) contacts are provided by D191, E195, E227, and E231. S252 provides a ligand contact to substrate.

Belongs to the ketol-acid reductoisomerase family. Mg(2+) is required as a cofactor.

It carries out the reaction (2R)-2,3-dihydroxy-3-methylbutanoate + NADP(+) = (2S)-2-acetolactate + NADPH + H(+). The enzyme catalyses (2R,3R)-2,3-dihydroxy-3-methylpentanoate + NADP(+) = (S)-2-ethyl-2-hydroxy-3-oxobutanoate + NADPH + H(+). Its pathway is amino-acid biosynthesis; L-isoleucine biosynthesis; L-isoleucine from 2-oxobutanoate: step 2/4. It participates in amino-acid biosynthesis; L-valine biosynthesis; L-valine from pyruvate: step 2/4. Its function is as follows. Involved in the biosynthesis of branched-chain amino acids (BCAA). Catalyzes an alkyl-migration followed by a ketol-acid reduction of (S)-2-acetolactate (S2AL) to yield (R)-2,3-dihydroxy-isovalerate. In the isomerase reaction, S2AL is rearranged via a Mg-dependent methyl migration to produce 3-hydroxy-3-methyl-2-ketobutyrate (HMKB). In the reductase reaction, this 2-ketoacid undergoes a metal-dependent reduction by NADPH to yield (R)-2,3-dihydroxy-isovalerate. This Nitrosopumilus maritimus (strain SCM1) protein is Ketol-acid reductoisomerase (NADP(+)).